The chain runs to 161 residues: MPAPILPLIEAAGRWPERGALVGLDLGTKTIGVAVSDPDRRLATGVETIQRKAFKADAARLLAICAERKVVGFVLGLPINMDGSEGPRAQSTRAFARNLAGLTDLPIGLWDERLSTAAVERELIGMDVSRAKRAEVIDTHAAIFILQGALDRLTTLRRSGQ.

This sequence belongs to the YqgF nuclease family.

The protein resides in the cytoplasm. In terms of biological role, could be a nuclease involved in processing of the 5'-end of pre-16S rRNA. The sequence is that of Putative pre-16S rRNA nuclease from Bradyrhizobium sp. (strain ORS 278).